A 236-amino-acid polypeptide reads, in one-letter code: Small ribosomal subunit protein bS21m (236 aa).

A disordered region spans residues 65 to 136 (KPAAGAAAGG…SSKPSPMQTW (72 aa)). The span at 107–131 (SNSSTSSSSSSSSSGGALYSSSKPS) shows a compositional bias: low complexity.

Belongs to the bacterial ribosomal protein bS21 family. As to quaternary structure, component of the mitochondrial small ribosomal subunit (mt-SSU). Mature N.crassa 74S mitochondrial ribosomes consist of a small (37S) and a large (54S) subunit. The 37S small subunit contains a 16S ribosomal RNA (16S mt-rRNA) and 32 different proteins. The 54S large subunit contains a 23S rRNA (23S mt-rRNA) and 42 different proteins.

The protein localises to the mitochondrion. Functionally, component of the mitochondrial ribosome (mitoribosome), a dedicated translation machinery responsible for the synthesis of mitochondrial genome-encoded proteins, including at least some of the essential transmembrane subunits of the mitochondrial respiratory chain. The mitoribosomes are attached to the mitochondrial inner membrane and translation products are cotranslationally integrated into the membrane. The polypeptide is Small ribosomal subunit protein bS21m (mrp21) (Neurospora crassa (strain ATCC 24698 / 74-OR23-1A / CBS 708.71 / DSM 1257 / FGSC 987)).